A 578-amino-acid chain; its full sequence is Zinc finger protein with KRAB and SCAN domains 8 (578 aa).

Residues 1-20 (MAEESRKPSAPSPPDQTPEE) are disordered. S12 is modified (phosphoserine). Residue K26 forms a Glycyl lysine isopeptide (Lys-Gly) (interchain with G-Cter in SUMO2) linkage. The 83-residue stretch at 51 to 133 (RLRFRQLCYQ…TLLEDLERQI (83 aa)) folds into the SCAN box domain. Residues 158–205 (ASAPEPPNTQLQSEATQHKSPVPQESQERSMSTSQSPTRSQKGSSGDQ) are disordered. A compositionally biased stretch (polar residues) spans 165-205 (NTQLQSEATQHKSPVPQESQERSMSTSQSPTRSQKGSSGDQ). Glycyl lysine isopeptide (Lys-Gly) (interchain with G-Cter in SUMO2) cross-links involve residues K176 and K199. A Phosphoserine modification is found at S201. Residues 220–316 (EKIEDMAVSL…GRLERQRGNP (97 aa)) form the KRAB domain. Residues K221, K272, and K288 each participate in a glycyl lysine isopeptide (Lys-Gly) (interchain with G-Cter in SUMO2) cross-link. C2H2-type zinc fingers lie at residues 322–344 (HKCD…WRIH) and 350–372 (YQCN…QDIH). Glycyl lysine isopeptide (Lys-Gly) (interchain with G-Cter in SUMO2) cross-links involve residues K374 and K376. C2H2-type zinc fingers lie at residues 378 to 400 (YHCK…QRIH), 406 to 428 (YQCN…QRIH), 434 to 456 (YECN…QRIH), 462 to 484 (YECD…QRSH), 490 to 512 (YKCN…QRIH), 518 to 540 (YKCK…LRIH), and 546 to 568 (YQCN…QRIH). Residues K413 and K441 each participate in a glycyl lysine isopeptide (Lys-Gly) (interchain with G-Cter in SUMO2) cross-link. A Glycyl lysine isopeptide (Lys-Gly) (interchain with G-Cter in SUMO2) cross-link involves residue K502. K572 participates in a covalent cross-link: Glycyl lysine isopeptide (Lys-Gly) (interchain with G-Cter in SUMO2).

The protein belongs to the krueppel C2H2-type zinc-finger protein family.

The protein resides in the nucleus. Functionally, may be involved in transcriptional regulation. This is Zinc finger protein with KRAB and SCAN domains 8 (ZKSCAN8) from Pan paniscus (Pygmy chimpanzee).